Reading from the N-terminus, the 422-residue chain is MDSILVKGNGELRGQIPIAGAKNACLALMPATLLSDEPLTLTNAPRLSDIRTMTQLLQSLGAEVASLQGGQVLALSSHALTDHRADYDIVRKMRASILVLGPMLARDGHAVVSLPGGCAIGARPVDLHLKALEAMGAELDLRDGYIHAKAPAGGLKGARVVFPLVSVGATENALMAATLAKGTTVLENAAREPEIVDLARCLRRMGAQIEGEGSSTITIEGVDRLGGATHPVVTDRIELGTYMLAPAICGGEVELLGGRIELVGAFCEKLDAAGISVEETERGLRVARRNGRVKAVDVMTEPFPGFPTDLQAQMMALLCTAEGTSVLEERIFENRFMHAPELIRMGARIEVHGGTATVTGVEKLRGAPVMATDLRASVSLILAGLAAEGETIVSRVYHLDRGYERVEEKLSACGAQIRRIPG.

22 to 23 is a binding site for phosphoenolpyruvate; that stretch reads KN. A UDP-N-acetyl-alpha-D-glucosamine-binding site is contributed by R94. C118 functions as the Proton donor in the catalytic mechanism. C118 carries the post-translational modification 2-(S-cysteinyl)pyruvic acid O-phosphothioketal. UDP-N-acetyl-alpha-D-glucosamine contacts are provided by residues 123–127, D309, and I331; that span reads RPVDL.

It belongs to the EPSP synthase family. MurA subfamily.

The protein localises to the cytoplasm. It carries out the reaction phosphoenolpyruvate + UDP-N-acetyl-alpha-D-glucosamine = UDP-N-acetyl-3-O-(1-carboxyvinyl)-alpha-D-glucosamine + phosphate. It participates in cell wall biogenesis; peptidoglycan biosynthesis. Its function is as follows. Cell wall formation. Adds enolpyruvyl to UDP-N-acetylglucosamine. The chain is UDP-N-acetylglucosamine 1-carboxyvinyltransferase from Cereibacter sphaeroides (strain ATCC 17029 / ATH 2.4.9) (Rhodobacter sphaeroides).